Here is a 312-residue protein sequence, read N- to C-terminus: tRNA uridine(34) hydroxylase (312 aa).

The region spanning 130 to 225 (RGDEVVFFDG…YGEQFGNKGL (96 aa)) is the Rhodanese domain. Catalysis depends on Cys185, which acts as the Cysteine persulfide intermediate.

This sequence belongs to the TrhO family.

It catalyses the reaction uridine(34) in tRNA + AH2 + O2 = 5-hydroxyuridine(34) in tRNA + A + H2O. In terms of biological role, catalyzes oxygen-dependent 5-hydroxyuridine (ho5U) modification at position 34 in tRNAs. The chain is tRNA uridine(34) hydroxylase from Corynebacterium glutamicum (strain R).